Here is a 230-residue protein sequence, read N- to C-terminus: Large ribosomal subunit protein uL1 (230 aa).

It belongs to the universal ribosomal protein uL1 family. Part of the 50S ribosomal subunit.

Binds directly to 23S rRNA. The L1 stalk is quite mobile in the ribosome, and is involved in E site tRNA release. Functionally, protein L1 is also a translational repressor protein, it controls the translation of the L11 operon by binding to its mRNA. The polypeptide is Large ribosomal subunit protein uL1 (Nitrosomonas europaea (strain ATCC 19718 / CIP 103999 / KCTC 2705 / NBRC 14298)).